The chain runs to 1544 residues: Lysine-specific demethylase 5B (1544 aa).

The segment covering 1–14 has biased composition (pro residues); that stretch reads MEPATTLPPGPRPA. The interval 1–22 is disordered; the sequence is MEPATTLPPGPRPALPLGGPGP. Positions 32–73 constitute a JmjN domain; sequence CPVFEPSWEEFADPFAFIHKIRPIAEQTGICKVRPPPDWQPP. The 91-residue stretch at 97–187 folds into the ARID domain; sequence TRVKLNFLDQ…ILNPYNLFLS (91 aa). Glycyl lysine isopeptide (Lys-Gly) (interchain with G-Cter in SUMO2) cross-links involve residues Lys-148, Lys-204, Lys-209, Lys-242, Lys-274, and Lys-278. Residues 200–228 form a disordered region; the sequence is TSDTKDKEYKPHDIPQRQSVQPAETCPPA. Residues 202–214 show a composition bias toward basic and acidic residues; it reads DTKDKEYKPHDIP. Positions 269-297 are disordered; it reads NEKEMKSTIKQEPTEKKDCELESEKEKPK. A PHD-type 1 zinc finger spans residues 309–359; that stretch reads LYVCLLCGSGNDEDRLLLCDGCDDSYHTFCLVPPLHDVPKGDWRCPKCLAQ. Tyr-425 lines the 2-oxoglutarate pocket. The region spanning 453–619 is the JmjC domain; it reads EYLDSGWNLN…LGRQCVEHYR (167 aa). Fe cation contacts are provided by His-499 and Glu-501. Residues Ser-507, Asn-509, and Lys-517 each contribute to the 2-oxoglutarate site. His-587 is a binding site for Fe cation. Residues 692–744 form a C5HC2 zinc finger; it reads CIKCKTTCFMSAISCSCKPGLLVCLHHVKELCSCPPYKYNLRYRYTLDDLYPM. Lys-769 participates in a covalent cross-link: Glycyl lysine isopeptide (Lys-Gly) (interchain with G-Cter in SUMO2). Position 832 is an N6-acetyllysine (Lys-832). Ser-986 carries the phosphoserine modification. The PHD-type 2 zinc finger occupies 1176-1224; sequence MKVCLCQKTPATPMIQCELCRDAFHTSCVAAPSISQSSRIWLCPHCRRS. A compositionally biased stretch (polar residues) spans 1297-1314; that stretch reads QASATDKVSQPPGTTSFS. Positions 1297–1318 are disordered; that stretch reads QASATDKVSQPPGTTSFSLPDD. Ser-1328 carries the phosphoserine modification. Positions 1374-1388 are enriched in polar residues; the sequence is PSSVQQADRSSPVRS. Residues 1374–1447 form a disordered region; the sequence is PSSVQQADRS…IKLSHPKDMD (74 aa). Residues 1389–1427 show a composition bias toward basic and acidic residues; it reads SSEKNDCLRGKRDAINSPERKLKRRPEREGLPSERWDRV. The segment covering 1428–1441 has biased composition (basic residues); the sequence is KHMRTPQKKKIKLS. Residue Lys-1450 forms a Glycyl lysine isopeptide (Lys-Gly) (interchain with G-Cter in SUMO2) linkage. Ser-1456 bears the Phosphoserine mark. The segment at 1484-1538 adopts a PHD-type 3 zinc-finger fold; sequence DAICPAVSCLQPEGDEVDWVQCDGSCNQWFHQVCVGVSPEMAEKEDYICVRCTGK.

This sequence belongs to the JARID1 histone demethylase family. In terms of assembly, interacts with FOXG1B, PAX9, MYC, MYCN and RB1. Interacts with HDAC1, HDAC4, HDAC5 and HDAC7. Interacts (via PHD-type 1 zinc finger) with histone H3 unmodified at 'Lys-4'; the interaction is inhibited when histone H3 is methylated at 'Arg-2' or 'Lys-4'. Fe(2+) is required as a cofactor. In terms of tissue distribution, present at highest levels in testis, where it is enriched in spermatogonia and pachytene cells (at protein level).

Its subcellular location is the nucleus. It carries out the reaction N(6),N(6),N(6)-trimethyl-L-lysyl(4)-[histone H3] + 3 2-oxoglutarate + 3 O2 = L-lysyl(4)-[histone H3] + 3 formaldehyde + 3 succinate + 3 CO2. Functionally, histone demethylase that demethylates 'Lys-4' of histone H3, thereby playing a central role in histone code. Does not demethylate histone H3 'Lys-9' or H3 'Lys-27'. Demethylates trimethylated, dimethylated and monomethylated H3 'Lys-4'. Acts as a transcriptional corepressor for FOXG1B and PAX9. Represses the CLOCK-BMAL1 heterodimer-mediated transcriptional activation of the core clock component PER2. This Mus musculus (Mouse) protein is Lysine-specific demethylase 5B (Kdm5b).